Consider the following 225-residue polypeptide: MDIRPNHTIYINNMNDKIKKEELKRSLYALFSQFGHVVDIVALKTMKMRGQAFVIFKELGSSTNALRQLQGFPFYGKPMRIQYAKTDSDIISKMRGTFADKEKKKEKKKAKTMEQAAAAANKKPGQGTPNAANTQGTAAPNPQVPDYPPNYILFLNNLPEETNEMMLSMLFNQFPGFKEVRLVPGRHDIAFVEFENDGQAGAARDALQGFKITPSHAMKITYAKK.

Residues 7-86 enclose the RRM 1 domain; sequence HTIYINNMND…KPMRIQYAKT (80 aa). Positions 100 to 144 are disordered; it reads DKEKKKEKKKAKTMEQAAAAANKKPGQGTPNAANTQGTAAPNPQV. K111 is subject to N6-acetyllysine; alternate. Residue K111 forms a Glycyl lysine isopeptide (Lys-Gly) (interchain with G-Cter in SUMO2); alternate linkage. The segment covering 113–123 has biased composition (low complexity); sequence MEQAAAAANKK. The segment covering 127-140 has biased composition (polar residues); that stretch reads GTPNAANTQGTAAP. Position 151 is a phosphotyrosine (Y151). In terms of domain architecture, RRM 2 spans 151–225; sequence YILFLNNLPE…HAMKITYAKK (75 aa).

This sequence belongs to the RRM U1 A/B'' family. In terms of assembly, identified in the spliceosome B complex. Identified in the spliceosome C complex. Present in a spliceosome complex assembled in vitro, and composed of SNRPB2, HPRP8BP and CRNKL1. Contributes to the binding of stem loop IV of U2 snRNA with SNRPP1.

It localises to the nucleus. Its function is as follows. Involved in pre-mRNA splicing as component of the spliceosome. Associated with sn-RNP U2, where it contributes to the binding of stem loop IV of U2 snRNA. The polypeptide is U2 small nuclear ribonucleoprotein B'' (Snrpb2) (Mus musculus (Mouse)).